We begin with the raw amino-acid sequence, 419 residues long: UDP-N-acetylglucosamine 1-carboxyvinyltransferase (419 aa).

Phosphoenolpyruvate is bound at residue 22–23 (KN). Arg95 contributes to the UDP-N-acetyl-alpha-D-glucosamine binding site. The Proton donor role is filled by Cys119. At Cys119 the chain carries 2-(S-cysteinyl)pyruvic acid O-phosphothioketal. UDP-N-acetyl-alpha-D-glucosamine contacts are provided by residues 164 to 167 (KVSV), Asp308, and Ile330.

Belongs to the EPSP synthase family. MurA subfamily.

Its subcellular location is the cytoplasm. The enzyme catalyses phosphoenolpyruvate + UDP-N-acetyl-alpha-D-glucosamine = UDP-N-acetyl-3-O-(1-carboxyvinyl)-alpha-D-glucosamine + phosphate. Its pathway is cell wall biogenesis; peptidoglycan biosynthesis. Cell wall formation. Adds enolpyruvyl to UDP-N-acetylglucosamine. This chain is UDP-N-acetylglucosamine 1-carboxyvinyltransferase, found in Rickettsia massiliae (strain Mtu5).